The following is a 233-amino-acid chain: Phosphatidylserine decarboxylase proenzyme (233 aa).

Ser201 acts as the Schiff-base intermediate with substrate; via pyruvic acid in catalysis. Residue Ser201 is modified to Pyruvic acid (Ser); by autocatalysis.

This sequence belongs to the phosphatidylserine decarboxylase family. PSD-A subfamily. In terms of assembly, heterodimer of a large membrane-associated beta subunit and a small pyruvoyl-containing alpha subunit. Requires pyruvate as cofactor. In terms of processing, is synthesized initially as an inactive proenzyme. Formation of the active enzyme involves a self-maturation process in which the active site pyruvoyl group is generated from an internal serine residue via an autocatalytic post-translational modification. Two non-identical subunits are generated from the proenzyme in this reaction, and the pyruvate is formed at the N-terminus of the alpha chain, which is derived from the carboxyl end of the proenzyme. The post-translation cleavage follows an unusual pathway, termed non-hydrolytic serinolysis, in which the side chain hydroxyl group of the serine supplies its oxygen atom to form the C-terminus of the beta chain, while the remainder of the serine residue undergoes an oxidative deamination to produce ammonia and the pyruvoyl prosthetic group on the alpha chain.

The protein localises to the cell membrane. The catalysed reaction is a 1,2-diacyl-sn-glycero-3-phospho-L-serine + H(+) = a 1,2-diacyl-sn-glycero-3-phosphoethanolamine + CO2. The protein operates within phospholipid metabolism; phosphatidylethanolamine biosynthesis; phosphatidylethanolamine from CDP-diacylglycerol: step 2/2. Catalyzes the formation of phosphatidylethanolamine (PtdEtn) from phosphatidylserine (PtdSer). The polypeptide is Phosphatidylserine decarboxylase proenzyme (Mycolicibacterium vanbaalenii (strain DSM 7251 / JCM 13017 / BCRC 16820 / KCTC 9966 / NRRL B-24157 / PYR-1) (Mycobacterium vanbaalenii)).